Consider the following 598-residue polypeptide: Probable translation initiation factor IF-2 (598 aa).

In terms of domain architecture, tr-type G spans 8 to 226; it reads IRQPIISVLG…VTGLAQRFLE (219 aa). The tract at residues 17-24 is G1; it reads GHVDHGKT. 17–24 is a GTP binding site; sequence GHVDHGKT. The interval 42-46 is G2; that stretch reads GITQH. Residues 81–84 form a G3 region; sequence DTPG. GTP is bound by residues 81 to 85 and 135 to 138; these read DTPGH and NKVD. The segment at 135–138 is G4; the sequence is NKVD. A G5 region spans residues 203 to 205; it reads SGV.

Belongs to the TRAFAC class translation factor GTPase superfamily. Classic translation factor GTPase family. IF-2 subfamily.

Functionally, function in general translation initiation by promoting the binding of the formylmethionine-tRNA to ribosomes. Seems to function along with eIF-2. This Methanopyrus kandleri (strain AV19 / DSM 6324 / JCM 9639 / NBRC 100938) protein is Probable translation initiation factor IF-2.